Consider the following 115-residue polypeptide: Nucleoid-associated protein PMN2A_1347 (115 aa).

Residues Ser-89–Asn-115 are disordered.

It belongs to the YbaB/EbfC family. Homodimer.

The protein localises to the cytoplasm. The protein resides in the nucleoid. Its function is as follows. Binds to DNA and alters its conformation. May be involved in regulation of gene expression, nucleoid organization and DNA protection. This is Nucleoid-associated protein PMN2A_1347 from Prochlorococcus marinus (strain NATL2A).